The sequence spans 255 residues: Pimeloyl-[acyl-carrier protein] methyl ester esterase (255 aa).

Residues 16–241 (LVLLHGWGMN…QSSHAPFMTE (226 aa)) form the AB hydrolase-1 domain. Residues tryptophan 22, 82-83 (SL), and 143-147 (FMALQ) each bind substrate. The Nucleophile role is filled by serine 82. Catalysis depends on residues aspartate 207 and histidine 235. Residue histidine 235 coordinates substrate.

It belongs to the AB hydrolase superfamily. Carboxylesterase BioH family. In terms of assembly, monomer.

The protein localises to the cytoplasm. It carries out the reaction 6-carboxyhexanoyl-[ACP] methyl ester + H2O = 6-carboxyhexanoyl-[ACP] + methanol + H(+). It functions in the pathway cofactor biosynthesis; biotin biosynthesis. Its function is as follows. The physiological role of BioH is to remove the methyl group introduced by BioC when the pimeloyl moiety is complete. It allows to synthesize pimeloyl-ACP via the fatty acid synthetic pathway through the hydrolysis of the ester bonds of pimeloyl-ACP esters. This Vibrio parahaemolyticus serotype O3:K6 (strain RIMD 2210633) protein is Pimeloyl-[acyl-carrier protein] methyl ester esterase.